Reading from the N-terminus, the 344-residue chain is Gas vesicle ATPase GvpN2 (344 aa).

The tract at residues 1–55 is disordered; sequence MTDTSRNRKVRGSKIRSSRSDKRQSRGSEDKELKRLADARDTDSEQAGDRVGDAF. The segment covering 7–17 has biased composition (basic residues); it reads NRKVRGSKIRS. Over residues 18-52 the composition is skewed to basic and acidic residues; sequence SRSDKRQSRGSEDKELKRLADARDTDSEQAGDRVG. Position 89–96 (89–96) interacts with ATP; it reads GPTGCGKT.

Belongs to the CbbQ/NirQ/NorQ/GpvN family. As to quaternary structure, forms homodimers, a GvpN-GvpO heterodimer, interacts with GvpC and GvpL, might interact with GvpA.

The protein resides in the gas vesicle. It localises to the cytoplasm. It catalyses the reaction ATP + H2O = ADP + phosphate + H(+). An ATPase that functions in gas vesicle formation. A minor component of the gas vesicle, also found in soluble extracts. Gas vesicles are hollow, gas filled proteinaceous nanostructures found in several microbial planktonic microorganisms. They allow positioning of halobacteria at the optimal depth for growth in the poorly aerated, shallow brine pools of their habitat. Its function is as follows. Expression of 2 c-vac DNA fragments containing 2 divergently transcribed regions (gvpE-gvpF-gvpG-gvpH-gvpI-gvpJ-gvpK-gvpL-gvpM and gvpA-gvpC-gvpN-gvpO) allows H.volcanii to produce gas vesicles. The protein is Gas vesicle ATPase GvpN2 of Halobacterium salinarum (strain ATCC 700922 / JCM 11081 / NRC-1) (Halobacterium halobium).